Here is a 239-residue protein sequence, read N- to C-terminus: MATPHINAEMGDFADVVLMPGDPLRAKFIAETFLQDVREVNNVRGMLGFTGTYKGRKISVMGHGMGIPSCSIYAKELITDFGVKKIIRVGSCGAVRTDVKLRDVVIGMGACTDSKVNRMRFKDHDYAAIADFEMTRNAVDAAKAKGVNVRVGNLFSADLFYTPDPQMFDVMEKYGILGVEMEAAGICGVAAEFGAKALTICTVSDHIRTGEQTTAAERQTTFNDMIEIALESVLLGDNA.

His-5 provides a ligand contact to a purine D-ribonucleoside. Residues Gly-21, Arg-25, Arg-44, and 88-91 (RVGS) each bind phosphate. A purine D-ribonucleoside-binding positions include 180–182 (EME) and 204–205 (SD). The active-site Proton donor is the Asp-205.

The protein belongs to the PNP/UDP phosphorylase family. In terms of assembly, homohexamer; trimer of homodimers.

It catalyses the reaction a purine D-ribonucleoside + phosphate = a purine nucleobase + alpha-D-ribose 1-phosphate. The enzyme catalyses a purine 2'-deoxy-D-ribonucleoside + phosphate = a purine nucleobase + 2-deoxy-alpha-D-ribose 1-phosphate. In terms of biological role, catalyzes the reversible phosphorolytic breakdown of the N-glycosidic bond in the beta-(deoxy)ribonucleoside molecules, with the formation of the corresponding free purine bases and pentose-1-phosphate. The polypeptide is Purine nucleoside phosphorylase DeoD-type (Yersinia pestis bv. Antiqua (strain Antiqua)).